The chain runs to 331 residues: MKAYAAPFEKFVNLADARLGTKIISVTDDWFADANRLFQPTPAVWKEGVFDDNGKWMDGWESRRKRFEGYDSAVIRLGVPGSIKGVDIDTSFFTGNYPPSASLEACFLASGEPDETTQWVEVLSAVELQGNSHHYHEINNDQAFSHLRFNIYPDGGVARLRVYGVPFRDWSSVGDNEQVDLAAALNGGRALACSDEHFGRMSNILNPGRGVNMGDGWETARRRTPGNDWVIVALGHPGEIEKIIVDTLHFKGNYPDTCSIQGAFVKGGTDSQIETQSLFWRELLPAQKLEMHAEHTFAEQIKALGPITHIRLNVFPDGGVSRLRVLGKVSK.

This sequence belongs to the allantoicase family.

The catalysed reaction is allantoate + H2O = (S)-ureidoglycolate + urea. It participates in nitrogen metabolism; (S)-allantoin degradation; (S)-ureidoglycolate from allantoate (aminidohydrolase route): step 1/1. The sequence is that of Probable allantoicase from Pseudomonas fluorescens (strain SBW25).